The following is a 56-amino-acid chain: Alpha-conotoxin EpI (56 aa).

A signal peptide spans 1–16; sequence MFTVFLLVVLATTVVS. A propeptide spanning residues 17-39 is cleaved from the precursor; sequence FTSDRASDSRKDAASGLIALTIK. 2 disulfide bridges follow: C41–C47 and C42–C55. The ser-Xaa-Pro motif, crucial for potent interaction with nAChR stretch occupies residues 43-45; sequence SDP. Residue Y54 is modified to Sulfotyrosine. The residue at position 55 (C55) is a Cysteine amide.

It belongs to the conotoxin A superfamily. Post-translationally, both tyrosine sulfation and C-terminal amidation are important for activity and structure stability. In terms of tissue distribution, expressed by the venom duct.

The protein resides in the secreted. Its function is as follows. Alpha-conotoxins act on postsynaptic membranes, they bind to the nicotinic acetylcholine receptors (nAChR) and thus inhibit them. This native peptide blocks mammalian nicotinic acetylcholine receptors composed of alpha-3-beta-2/CHRNA3-CHRNB2 and alpha-3-beta-4/CHRNA3-CHRNB4 subunits. This is Alpha-conotoxin EpI from Conus episcopatus (Bishop's cone).